The primary structure comprises 1375 residues: DNA-directed RNA polymerase subunit beta (1375 aa).

Belongs to the RNA polymerase beta chain family. The RNAP catalytic core consists of 2 alpha, 1 beta, 1 beta' and 1 omega subunit. When a sigma factor is associated with the core the holoenzyme is formed, which can initiate transcription.

The catalysed reaction is RNA(n) + a ribonucleoside 5'-triphosphate = RNA(n+1) + diphosphate. Its function is as follows. DNA-dependent RNA polymerase catalyzes the transcription of DNA into RNA using the four ribonucleoside triphosphates as substrates. This chain is DNA-directed RNA polymerase subunit beta, found in Malacoplasma penetrans (strain HF-2) (Mycoplasma penetrans).